Here is a 95-residue protein sequence, read N- to C-terminus: Parvalbumin alpha (95 aa).

Position 19 is a phosphoserine (serine 19). 2 consecutive EF-hand domains span residues 34–69 (KNRE…FSAD) and 73–95 (LSDT…KIGA). 10 residues coordinate Ca(2+): aspartate 47, aspartate 49, serine 51, phenylalanine 53, glutamate 55, glutamate 58, aspartate 86, aspartate 88, aspartate 90, and lysine 92.

This sequence belongs to the parvalbumin family.

In terms of biological role, in muscle, parvalbumin is thought to be involved in relaxation after contraction. It binds two calcium ions. This chain is Parvalbumin alpha (PVALB), found in Cavia porcellus (Guinea pig).